A 381-amino-acid chain; its full sequence is Adenylate cyclase (381 aa).

Positions 1 to 30 (MTVDDTGSGADGDGRVDPEPAPDSADPGED) are disordered. The 110-residue stretch at 191–300 (AVGFADLVGF…TTVNLASRLT (110 aa)) folds into the Guanylate cyclase domain. Mg(2+)-binding residues include Asp-196 and Asp-240.

It belongs to the adenylyl cyclase class-3 family. It depends on Mg(2+) as a cofactor.

The catalysed reaction is ATP = 3',5'-cyclic AMP + diphosphate. This is Adenylate cyclase (cya) from Streptomyces coelicolor (strain ATCC BAA-471 / A3(2) / M145).